The primary structure comprises 107 residues: U1-lycotoxin-Ls1t (107 aa).

The first 20 residues, 1–20 (MMKVLVVVALLVTLISYSSS), serve as a signal peptide directing secretion. The propeptide occupies 21-41 (EGIDDLEADELLSLMANEQTR). 4 disulfide bridges follow: Cys44–Cys59, Cys51–Cys68, Cys58–Cys86, and Cys70–Cys84.

Belongs to the neurotoxin 19 (CSTX) family. 04 (U1-Lctx) subfamily. Expressed by the venom gland.

Its subcellular location is the secreted. This is U1-lycotoxin-Ls1t from Lycosa singoriensis (Wolf spider).